The primary structure comprises 495 residues: Cytochrome P450 710A1 (495 aa).

The helical transmembrane segment at 5–25 (VSIFASLAPYLISAFLLFLLV) threads the bilayer. Cys434 is a heme binding site.

This sequence belongs to the cytochrome P450 family. Heme serves as cofactor. Expressed in the vascular tissues of roots, shoots and leaves. Expressed in root tips and sepals. Very low expression in stems and siliques.

It localises to the membrane. The catalysed reaction is 5-dehydroepisterol + NADPH + O2 + H(+) = ergosta-5,7,22,24(28)-tetraen-3beta-ol + NADP(+) + 2 H2O. It participates in steroid biosynthesis; sterol biosynthesis. Functionally, required to form the C-22 double bond in the sterol side chain. Possesses in vitro C-22 desaturase activity toward beta-sitosterol and produces stigmasterol. No activity with campesterol. The protein is Cytochrome P450 710A1 of Arabidopsis thaliana (Mouse-ear cress).